A 425-amino-acid polypeptide reads, in one-letter code: G protein-activated inward rectifier potassium channel 2 (425 aa).

Over 1 to 91 (MTMAKLTESM…ILTTLVDLKW (91 aa)) the chain is Cytoplasmic. Residues S18 and S25 each carry the phosphoserine modification. A helical transmembrane segment spans residues 92–116 (RFNLLIFVMVYTVTWLFFGMIWWLI). At 117–140 (AYIRGDMDHVEDPSWTPCVTNLNG) the chain is on the extracellular side. An intramembrane region (helical; Pore-forming) is located at residues 141 to 152 (FVSAFLFSIETE). The segment at residues 153-159 (TTIGYGY) is an intramembrane region (pore-forming). Residues 154-159 (TIGYGY) carry the Selectivity filter motif. Over 160 to 168 (RVITDKCPE) the chain is Extracellular. The helical transmembrane segment at 169–190 (GIILLLIQSVLGSIVNAFMVGC) threads the bilayer. Over 191–425 (MFVKISQPKK…VANLENESKV (235 aa)) the chain is Cytoplasmic. A disordered region spans residues 392 to 425 (NQHAELETEEEEKNPEEQTERNGDVANLENESKV). The short motif at 422 to 425 (ESKV) is the PDZ-binding element.

The protein belongs to the inward rectifier-type potassium channel (TC 1.A.2.1) family. KCNJ6 subfamily. As to quaternary structure, associates with KCNJ3/GIRK1 or KCNJ5/GRIK4 to form a G-protein-activated heteromultimer pore-forming unit. The resulting inward current is much larger. Interacts (via PDZ-binding motif) with SNX27 (via PDZ domain); the interaction is required when endocytosed to prevent degradation in lysosomes and promote recycling to the plasma membrane. As to expression, expressed in insulin-secreting cells and brain.

It localises to the membrane. The catalysed reaction is K(+)(in) = K(+)(out). Activated by phosphatidylinositol 4,5 biphosphate (PtdIns(4,5)P2). Its function is as follows. Inward rectifier potassium channels are characterized by a greater tendency to allow potassium to flow into the cell rather than out of it. Their voltage dependence is regulated by the concentration of extracellular potassium; as external potassium is raised, the voltage range of the channel opening shifts to more positive voltages. The inward rectification is mainly due to the blockage of outward current by internal magnesium. This potassium channel may be involved in the regulation of insulin secretion by glucose and/or neurotransmitters acting through G-protein-coupled receptors. The chain is G protein-activated inward rectifier potassium channel 2 (KCNJ6) from Mesocricetus auratus (Golden hamster).